The chain runs to 363 residues: 3-isopropylmalate dehydrogenase (363 aa).

78 to 91 (GPKWEHLPPAEQPE) provides a ligand contact to NAD(+). Substrate contacts are provided by Arg99, Arg109, Arg138, and Asp227. Mg(2+)-binding residues include Asp227, Asp251, and Asp255. 285–297 (GSAPDIAGKGIAN) contributes to the NAD(+) binding site.

Belongs to the isocitrate and isopropylmalate dehydrogenases family. LeuB type 1 subfamily. Homodimer. Requires Mg(2+) as cofactor. Mn(2+) is required as a cofactor.

It is found in the cytoplasm. The enzyme catalyses (2R,3S)-3-isopropylmalate + NAD(+) = 4-methyl-2-oxopentanoate + CO2 + NADH. It functions in the pathway amino-acid biosynthesis; L-leucine biosynthesis; L-leucine from 3-methyl-2-oxobutanoate: step 3/4. Its function is as follows. Catalyzes the oxidation of 3-carboxy-2-hydroxy-4-methylpentanoate (3-isopropylmalate) to 3-carboxy-4-methyl-2-oxopentanoate. The product decarboxylates to 4-methyl-2 oxopentanoate. This Photorhabdus laumondii subsp. laumondii (strain DSM 15139 / CIP 105565 / TT01) (Photorhabdus luminescens subsp. laumondii) protein is 3-isopropylmalate dehydrogenase.